A 276-amino-acid polypeptide reads, in one-letter code: Adenylate kinase (276 aa).

51–56 (GAGKGT) is an ATP binding site. Positions 71–100 (ATGDMLRSQVAKKTPLGQAAKKIMDAGGLV) are NMP. AMP contacts are provided by residues threonine 72, arginine 77, 98–100 (GLV), 127–130 (GFPR), and glutamine 134. Residues 168–205 (GRLVHPASGRSYHVKFNPPKKEMTDDITGEPLIQRSDD) are LID. ATP-binding positions include arginine 169 and 178-179 (SY). 2 residues coordinate AMP: arginine 202 and arginine 213. Glutamine 241 is an ATP binding site.

The protein belongs to the adenylate kinase family. AK2 subfamily. Monomer.

The protein localises to the cytoplasm. It localises to the cytosol. Its subcellular location is the mitochondrion intermembrane space. The catalysed reaction is AMP + ATP = 2 ADP. Functionally, catalyzes the reversible transfer of the terminal phosphate group between ATP and AMP. Plays an important role in cellular energy homeostasis and in adenine nucleotide metabolism. Adenylate kinase activity is critical for regulation of the phosphate utilization and the AMP de novo biosynthesis pathways. This is Adenylate kinase from Podospora anserina (strain S / ATCC MYA-4624 / DSM 980 / FGSC 10383) (Pleurage anserina).